The chain runs to 279 residues: Urease accessory protein UreD (279 aa).

Belongs to the UreD family. UreD, UreF and UreG form a complex that acts as a GTP-hydrolysis-dependent molecular chaperone, activating the urease apoprotein by helping to assemble the nickel containing metallocenter of UreC. The UreE protein probably delivers the nickel.

It is found in the cytoplasm. In terms of biological role, required for maturation of urease via the functional incorporation of the urease nickel metallocenter. The protein is Urease accessory protein UreD of Nostoc sp. (strain PCC 7120 / SAG 25.82 / UTEX 2576).